We begin with the raw amino-acid sequence, 1102 residues long: DNA-directed RNA polymerase subunit beta (1102 aa).

The interval 1081-1102 is disordered; the sequence is LPGKRTPSRPIYESLSTEGNQD.

Belongs to the RNA polymerase beta chain family. In cyanobacteria the RNAP catalytic core is composed of 2 alpha, 1 beta, 1 beta', 1 gamma and 1 omega subunit. When a sigma factor is associated with the core the holoenzyme is formed, which can initiate transcription.

The enzyme catalyses RNA(n) + a ribonucleoside 5'-triphosphate = RNA(n+1) + diphosphate. DNA-dependent RNA polymerase catalyzes the transcription of DNA into RNA using the four ribonucleoside triphosphates as substrates. The protein is DNA-directed RNA polymerase subunit beta of Trichodesmium erythraeum (strain IMS101).